The chain runs to 351 residues: Glycerol-1-phosphate dehydrogenase [NAD(P)+] (351 aa).

NAD(+) is bound by residues 93-97 (GKVLD) and 115-118 (TTAS). Aspartate 120 contributes to the substrate binding site. NAD(+) is bound at residue serine 124. Aspartate 167 contacts substrate. Zn(2+)-binding residues include aspartate 167 and histidine 247. Histidine 251 contacts substrate. Histidine 263 contacts Zn(2+).

It belongs to the glycerol-1-phosphate dehydrogenase family. Requires Zn(2+) as cofactor.

It localises to the cytoplasm. It carries out the reaction sn-glycerol 1-phosphate + NAD(+) = dihydroxyacetone phosphate + NADH + H(+). The catalysed reaction is sn-glycerol 1-phosphate + NADP(+) = dihydroxyacetone phosphate + NADPH + H(+). The protein operates within membrane lipid metabolism; glycerophospholipid metabolism. Its function is as follows. Catalyzes the NAD(P)H-dependent reduction of dihydroxyacetonephosphate (DHAP or glycerone phosphate) to glycerol 1-phosphate (G1P). The G1P thus generated is used as the glycerophosphate backbone of phospholipids in the cellular membranes of Archaea. This Archaeoglobus fulgidus (strain ATCC 49558 / DSM 4304 / JCM 9628 / NBRC 100126 / VC-16) protein is Glycerol-1-phosphate dehydrogenase [NAD(P)+].